The primary structure comprises 176 residues: RNA polymerase sigma factor SigO (176 aa).

The Polymerase core binding motif lies at 30 to 43; it reads DARSLDELFKQFYK. Positions 139 to 158 form a DNA-binding region, H-T-H motif; it reads MQEIADSLGESRQNISNIHK.

It belongs to the sigma-70 factor family. As to quaternary structure, interacts with RNA polymerase.

Functionally, sigma factors are initiation factors that promote the attachment of RNA polymerase to specific initiation sites and are then released. Together with its coactivator RsoA, positively regulates the expression of at least three operons, including oxdC-yvrL, sigO-rsoA and yvrJ. Required for the acid stress-dependent induction of the oxalate decarboxylase oxdC. The sequence is that of RNA polymerase sigma factor SigO (sigO) from Bacillus subtilis (strain 168).